We begin with the raw amino-acid sequence, 1108 residues long: Serine/threonine-protein kinase AKL1 (1108 aa).

Serine 2 carries the N-acetylserine modification. Serine 10 carries the phosphoserine modification. The Protein kinase domain occupies 35–319 (VEVVNYLAEG…IYQVLYHLCE (285 aa)). ATP is bound by residues 41-49 (LAEGGFAQI) and lysine 70. The active-site Proton acceptor is aspartate 181. The disordered stretch occupies residues 405–466 (IPSQNVGQEL…QSPGIEDKSI (62 aa)). Position 407 is a phosphoserine (serine 407). Residues 419 to 435 (ESQSDQRKSTLSEDKSS) show a composition bias toward basic and acidic residues. Residues 436-449 (RTTSNANSSGTANN) show a composition bias toward low complexity. Threonine 471 bears the Phosphothreonine mark. The span at 493 to 513 (KQSSDPTISEQSPRLNTQSLP) shows a compositional bias: polar residues. The interval 493 to 534 (KQSSDPTISEQSPRLNTQSLPQRQKSTSSYSSGGRSMKSTSY) is disordered. Residue serine 504 is modified to Phosphoserine. The segment covering 514-534 (QRQKSTSSYSSGGRSMKSTSY) has biased composition (low complexity). A phosphoserine mark is found at serine 541 and serine 574. A compositionally biased stretch (low complexity) spans 590-629 (QQQGQRYQQAQNQTGTQGNTFPDESQYQSRVEQQQQQQDQ). Disordered regions lie at residues 590–663 (QQQG…GDSG) and 765–791 (EDMR…HSSS). The segment covering 781–791 (NSANEPMHSSS) has biased composition (polar residues). Phosphoserine is present on serine 801. The tract at residues 807 to 838 (AGKQSFQDTNEPQTGGIEDAGGSGTIKGSNNN) is disordered. A compositionally biased stretch (polar residues) spans 810-819 (QSFQDTNEPQ). Serine 846 carries the phosphoserine modification. The disordered stretch occupies residues 858–1108 (GAAVSSFSSS…SFFSVFRSEK (251 aa)). A compositionally biased stretch (low complexity) spans 859–872 (AAVSSFSSSSSSAS). Positions 910 to 934 (DDARRGKTAERRPLHNERGHKDQAR) are enriched in basic and acidic residues. Positions 935-976 (SSDASKSNQFKSKDFSSVSTRQPRQSLDLNFQEVNLSSPTLT) are enriched in polar residues. A phosphoserine mark is found at serine 953 and serine 960. Residues 1006–1048 (ENKRHSTGHELSTRSNGKHETHRTGSKQRHDLERYRHSKDKDS) show a composition bias toward basic and acidic residues. Glycyl lysine isopeptide (Lys-Gly) (interchain with G-Cter in ubiquitin) cross-links involve residues lysine 1008 and lysine 1046. Residue serine 1048 is modified to Phosphoserine. The span at 1049-1060 (NSSITISTSTPS) shows a compositional bias: low complexity. Over residues 1071-1082 (QSLDLERVRREA) the composition is skewed to basic and acidic residues. The residue at position 1072 (serine 1072) is a Phosphoserine.

It belongs to the protein kinase superfamily. Ser/Thr protein kinase family.

It carries out the reaction L-seryl-[protein] + ATP = O-phospho-L-seryl-[protein] + ADP + H(+). The enzyme catalyses L-threonyl-[protein] + ATP = O-phospho-L-threonyl-[protein] + ADP + H(+). Functionally, phosphorylates SCD5. The chain is Serine/threonine-protein kinase AKL1 (AKL1) from Saccharomyces cerevisiae (strain ATCC 204508 / S288c) (Baker's yeast).